The following is a 305-amino-acid chain: Acetyl-coenzyme A carboxylase carboxyl transferase subunit beta (305 aa).

Residues 23 to 292 (GWLKCTHCNE…EENEPSPPPK (270 aa)) form the CoA carboxyltransferase N-terminal domain. 4 residues coordinate Zn(2+): C27, C30, C46, and C49. A C4-type zinc finger spans residues 27 to 49 (CTHCNELIHANELEQNSNCCPKC). The tract at residues 281-305 (FSEENEPSPPPKNLIKKTSPLKDKN) is disordered.

This sequence belongs to the AccD/PCCB family. As to quaternary structure, acetyl-CoA carboxylase is a heterohexamer composed of biotin carboxyl carrier protein (AccB), biotin carboxylase (AccC) and two subunits each of ACCase subunit alpha (AccA) and ACCase subunit beta (AccD). The cofactor is Zn(2+).

It is found in the cytoplasm. The catalysed reaction is N(6)-carboxybiotinyl-L-lysyl-[protein] + acetyl-CoA = N(6)-biotinyl-L-lysyl-[protein] + malonyl-CoA. It functions in the pathway lipid metabolism; malonyl-CoA biosynthesis; malonyl-CoA from acetyl-CoA: step 1/1. In terms of biological role, component of the acetyl coenzyme A carboxylase (ACC) complex. Biotin carboxylase (BC) catalyzes the carboxylation of biotin on its carrier protein (BCCP) and then the CO(2) group is transferred by the transcarboxylase to acetyl-CoA to form malonyl-CoA. The polypeptide is Acetyl-coenzyme A carboxylase carboxyl transferase subunit beta (Protochlamydia amoebophila (strain UWE25)).